The chain runs to 258 residues: Alpha-hydroxynitrile lyase (258 aa).

Residues serine 81 and histidine 236 each act as proton donor/acceptor in the active site.

The protein belongs to the AB hydrolase superfamily. Hydroxynitrile lyase family. Homodimer.

The catalysed reaction is (R)-mandelonitrile = benzaldehyde + hydrogen cyanide. Involved in cyanogenesis, the release of HCN from injured tissues. Displays R-selective hydroxynitrile lyase activity. Also accepts nitromethane (MeNO2) as a donor in a reaction with aromatic aldehydes to yield (R)-beta-nitro alcohols. This chain is Alpha-hydroxynitrile lyase, found in Arabidopsis thaliana (Mouse-ear cress).